The primary structure comprises 75 residues: Small ribosomal subunit protein bS18 (75 aa).

The protein belongs to the bacterial ribosomal protein bS18 family. In terms of assembly, part of the 30S ribosomal subunit. Forms a tight heterodimer with protein bS6.

In terms of biological role, binds as a heterodimer with protein bS6 to the central domain of the 16S rRNA, where it helps stabilize the platform of the 30S subunit. The sequence is that of Small ribosomal subunit protein bS18 from Hydrogenovibrio crunogenus (strain DSM 25203 / XCL-2) (Thiomicrospira crunogena).